Reading from the N-terminus, the 196-residue chain is Gastrula zinc finger protein XlCGF8.2DB (196 aa).

7 C2H2-type zinc fingers span residues 6–28 (FTCK…MTIH), 34–56 (FSCT…LTIH), 62–84 (FPCT…MKIH), 90–112 (FTCT…LKIH), 118–140 (FSCT…MKIH), 146–168 (FTCT…LKMH), and 174–196 (FTCT…MKIH).

It belongs to the krueppel C2H2-type zinc-finger protein family.

The protein resides in the nucleus. Its function is as follows. May be involved in transcriptional regulation. The protein is Gastrula zinc finger protein XlCGF8.2DB of Xenopus laevis (African clawed frog).